Reading from the N-terminus, the 313-residue chain is Porphobilinogen deaminase (313 aa).

Residue Cys-242 is modified to S-(dipyrrolylmethanemethyl)cysteine.

It belongs to the HMBS family. In terms of assembly, monomer. It depends on dipyrromethane as a cofactor.

The catalysed reaction is 4 porphobilinogen + H2O = hydroxymethylbilane + 4 NH4(+). It participates in porphyrin-containing compound metabolism; protoporphyrin-IX biosynthesis; coproporphyrinogen-III from 5-aminolevulinate: step 2/4. In terms of biological role, tetrapolymerization of the monopyrrole PBG into the hydroxymethylbilane pre-uroporphyrinogen in several discrete steps. The polypeptide is Porphobilinogen deaminase (Pseudomonas syringae pv. syringae (strain B728a)).